Here is a 242-residue protein sequence, read N- to C-terminus: Carboxy-S-adenosyl-L-methionine synthase (242 aa).

S-adenosyl-L-methionine is bound by residues Y39, 64–66, 89–90, 117–118, N132, and R199; these read GCS, DN, and DI.

Belongs to the class I-like SAM-binding methyltransferase superfamily. Cx-SAM synthase family. Homodimer.

The catalysed reaction is prephenate + S-adenosyl-L-methionine = carboxy-S-adenosyl-L-methionine + 3-phenylpyruvate + H2O. Functionally, catalyzes the conversion of S-adenosyl-L-methionine (SAM) to carboxy-S-adenosyl-L-methionine (Cx-SAM). In Aliivibrio fischeri (strain MJ11) (Vibrio fischeri), this protein is Carboxy-S-adenosyl-L-methionine synthase.